A 67-amino-acid polypeptide reads, in one-letter code: Protein AaeX (67 aa).

2 helical membrane-spanning segments follow: residues 3-23 (LFPV…ELLL) and 43-63 (FVWH…YLIS).

Belongs to the AaeX family.

It is found in the cell membrane. This chain is Protein AaeX, found in Salmonella agona (strain SL483).